Consider the following 172-residue polypeptide: Large ribosomal subunit protein uL10 (172 aa).

It belongs to the universal ribosomal protein uL10 family. As to quaternary structure, part of the ribosomal stalk of the 50S ribosomal subunit. The N-terminus interacts with L11 and the large rRNA to form the base of the stalk. The C-terminus forms an elongated spine to which L12 dimers bind in a sequential fashion forming a multimeric L10(L12)X complex.

In terms of biological role, forms part of the ribosomal stalk, playing a central role in the interaction of the ribosome with GTP-bound translation factors. The chain is Large ribosomal subunit protein uL10 from Chlorobium luteolum (strain DSM 273 / BCRC 81028 / 2530) (Pelodictyon luteolum).